A 103-amino-acid polypeptide reads, in one-letter code: Large ribosomal subunit protein bL21 (103 aa).

Belongs to the bacterial ribosomal protein bL21 family. In terms of assembly, part of the 50S ribosomal subunit. Contacts protein L20.

In terms of biological role, this protein binds to 23S rRNA in the presence of protein L20. The chain is Large ribosomal subunit protein bL21 from Lactobacillus acidophilus (strain ATCC 700396 / NCK56 / N2 / NCFM).